Here is a 130-residue protein sequence, read N- to C-terminus: Small ribosomal subunit protein uS11c (130 aa).

Belongs to the universal ribosomal protein uS11 family. In terms of assembly, part of the 30S ribosomal subunit.

The protein resides in the plastid. Its subcellular location is the chloroplast. This Guillardia theta (Cryptophyte) protein is Small ribosomal subunit protein uS11c.